A 78-amino-acid chain; its full sequence is Large ribosomal subunit protein bL31 (78 aa).

It belongs to the bacterial ribosomal protein bL31 family. Type A subfamily. As to quaternary structure, part of the 50S ribosomal subunit.

Its function is as follows. Binds the 23S rRNA. This is Large ribosomal subunit protein bL31 from Rickettsia prowazekii (strain Madrid E).